A 716-amino-acid polypeptide reads, in one-letter code: Phenylalanine/tyrosine ammonia-lyase (716 aa).

Tyr110 serves as the catalytic Proton donor/acceptor. The segment at residues 211–213 (ASG) is a cross-link (5-imidazolinone (Ala-Gly)). At Ser212 the chain carries 2,3-didehydroalanine (Ser). Positions 270, 360, 366, 397, 468, 496, and 499 each coordinate (E)-cinnamate.

Belongs to the PAL/histidase family. Homotetramer. Dimer of dimers. Post-translationally, contains an active site 4-methylidene-imidazol-5-one (MIO), which is formed autocatalytically by cyclization and dehydration of residues Ala-Ser-Gly.

Its subcellular location is the cytoplasm. It carries out the reaction L-phenylalanine = (E)-cinnamate + NH4(+). The catalysed reaction is L-tyrosine = (E)-4-coumarate + NH4(+). It functions in the pathway phenylpropanoid metabolism; trans-cinnamate biosynthesis; trans-cinnamate from L-phenylalanine: step 1/1. Its function is as follows. Catalyzes the non-oxidative deamination of L-phenylalanine and L-tyrosine to form trans-cinnamic acid and p-coumaric acid respectively with similar efficiencies. Facilitates the commitment step in phenylpropanoid pathways that produce secondary metabolites such as lignins, coumarins and flavonoids. This Rhodotorula toruloides (Yeast) protein is Phenylalanine/tyrosine ammonia-lyase (PAL).